Reading from the N-terminus, the 322-residue chain is 3-alpha-hydroxysteroid dehydrogenase (322 aa).

Met-1 carries the blocked amino end (Met) modification. NADP(+) is bound by residues 20–24 (GFGTT) and Asp-50. The Proton donor role is filled by Tyr-55. His-117 is a substrate binding site. NADP(+) contacts are provided by residues 166 to 167 (SN), Gln-190, and 216 to 221 (YCTLGS). Trp-227 contacts substrate. 270-280 (RSFNAKRIKEL) serves as a coordination point for NADP(+).

Belongs to the aldo/keto reductase family. In terms of assembly, monomer. In terms of tissue distribution, in brain, highest levels found in olfactory bulb. Moderate levels present in cerebellum, cerebral cortex, hypothalamus and pituitary. Low levels present in amygdala, brain stem, caudate putamen, cingulate cortex, hippocampus, midbrain, and thalamus.

Its subcellular location is the cytoplasm. It catalyses the reaction a 3alpha-hydroxysteroid + NADP(+) = a 3-oxosteroid + NADPH + H(+). The catalysed reaction is a 3alpha-hydroxysteroid + NAD(+) = a 3-oxosteroid + NADH + H(+). With respect to regulation, potently inhibited by the nonsteroidal anti-inflammatory drugs (NSAID). Its function is as follows. Besides being a 3-alpha-hydroxysteroid dehydrogenase, the enzyme can accomplish diverse functions: as quinone reductase, as an aromatic alcohol dehydrogenase, as dihydrodiol dehydrogenase, and as 9-, 11-, and 15-hydroxyprostaglandin dehydrogenase. The polypeptide is 3-alpha-hydroxysteroid dehydrogenase (Akr1c9) (Rattus norvegicus (Rat)).